The chain runs to 437 residues: Probable N-acetylmuramidase (437 aa).

Residues 1–57 form the signal peptide; the sequence is MPVSRVKVKNRHLKKKTKKPLAFYKPTTKFVGAVLIAGTLTTTHELLLQQTSPMVQA. Disordered stretches follow at residues 217-244, 291-319, and 367-392; these read SSAG…SSTT, SSTN…ASQT, and ATSN…NSNA. The LysM 1 domain occupies 243-286; the sequence is TTYTVKSGDTLWGISQRYGISVAQIQSANNLKSTIIYIGQKLLL. Residues 291–317 show a composition bias toward low complexity; the sequence is SSTNSGGSNNSASTTPTTSVTPAKPAS. The 44-residue stretch at 319–362 folds into the LysM 2 domain; the sequence is TSVKVKSGDTLWALSVKYKTSIAQLKSWNHLSSDTIYIGQNLIV. The 44-residue stretch at 393 to 436 folds into the LysM 3 domain; the sequence is SIHKVVKGDTLWGLSQKSGSPIASIKAWNHLSSDTILIGQYLRI.

The protein belongs to the glycosyl hydrolase 73 family.

It localises to the secreted. The enzyme catalyses Hydrolysis of (1-&gt;4)-beta-linkages between N-acetylmuramic acid and N-acetyl-D-glucosamine residues in a peptidoglycan and between N-acetyl-D-glucosamine residues in chitodextrins.. In terms of biological role, hydrolyzes the cell wall of L.lactis and M.lysodeikticus. Required for cell separation during growth. The protein is Probable N-acetylmuramidase (acmA) of Lactococcus lactis subsp. cremoris (Streptococcus cremoris).